A 327-amino-acid polypeptide reads, in one-letter code: Undecaprenyl-phosphate 4-deoxy-4-formamido-L-arabinose transferase (327 aa).

Helical transmembrane passes span 236 to 256 (LSIF…LLVV) and 270 to 290 (VFML…GMGL).

Belongs to the glycosyltransferase 2 family.

The protein localises to the cell inner membrane. The enzyme catalyses UDP-4-deoxy-4-formamido-beta-L-arabinose + di-trans,octa-cis-undecaprenyl phosphate = 4-deoxy-4-formamido-alpha-L-arabinopyranosyl di-trans,octa-cis-undecaprenyl phosphate + UDP. Its pathway is glycolipid biosynthesis; 4-amino-4-deoxy-alpha-L-arabinose undecaprenyl phosphate biosynthesis; 4-amino-4-deoxy-alpha-L-arabinose undecaprenyl phosphate from UDP-4-deoxy-4-formamido-beta-L-arabinose and undecaprenyl phosphate: step 1/2. It participates in bacterial outer membrane biogenesis; lipopolysaccharide biosynthesis. In terms of biological role, catalyzes the transfer of 4-deoxy-4-formamido-L-arabinose from UDP to undecaprenyl phosphate. The modified arabinose is attached to lipid A and is required for resistance to polymyxin and cationic antimicrobial peptides. The protein is Undecaprenyl-phosphate 4-deoxy-4-formamido-L-arabinose transferase of Klebsiella pneumoniae (strain 342).